The chain runs to 110 residues: Coiled-coil-helix-coiled-coil-helix domain-containing protein 5 (110 aa).

Methionine 1 carries the post-translational modification N-acetylmethionine. 2 CHCH domains span residues 9 to 52 and 55 to 97; these read ARYC…PIIR and RQAC…QPPR. 4 consecutive short sequence motifs (cx9C motif) follow at residues 12 to 22, 34 to 44, 58 to 68, and 79 to 89; these read CGRELEQYGQC, CHYLKMSIAQC, CAQPFEAFEEC, and CAEHMRRFLQC. 4 disulfides stabilise this stretch: cysteine 12/cysteine 44, cysteine 22/cysteine 34, cysteine 58/cysteine 89, and cysteine 68/cysteine 79.

Monomer.

It is found in the mitochondrion intermembrane space. This Homo sapiens (Human) protein is Coiled-coil-helix-coiled-coil-helix domain-containing protein 5 (CHCHD5).